Consider the following 89-residue polypeptide: Large ribosomal subunit protein bL27 (89 aa).

The tract at residues 1-22 (MAHKKAGGSSRNGRDSESKRLG) is disordered.

The protein belongs to the bacterial ribosomal protein bL27 family.

This chain is Large ribosomal subunit protein bL27, found in Brucella abortus (strain S19).